The following is a 1349-amino-acid chain: DNA-directed RNA polymerase subunit beta' (1349 aa).

Residues Cys-219, Cys-293, Cys-300, and Cys-303 each contribute to the Zn(2+) site. The interval 1298-1349 is disordered; it reads LDSPTLGESGFGSRRAERSVLDDEDELIADEVVDDDDFEEEEEDDEDDFDDE. Residues 1319–1349 show a composition bias toward acidic residues; it reads DDEDELIADEVVDDDDFEEEEEDDEDDFDDE.

It belongs to the RNA polymerase beta' chain family. RpoC2 subfamily. In cyanobacteria the RNAP catalytic core is composed of 2 alpha, 1 beta, 1 beta', 1 gamma and 1 omega subunit. When a sigma factor is associated with the core the holoenzyme is formed, which can initiate transcription. Zn(2+) is required as a cofactor.

The catalysed reaction is RNA(n) + a ribonucleoside 5'-triphosphate = RNA(n+1) + diphosphate. DNA-dependent RNA polymerase catalyzes the transcription of DNA into RNA using the four ribonucleoside triphosphates as substrates. The chain is DNA-directed RNA polymerase subunit beta' from Nostoc punctiforme (strain ATCC 29133 / PCC 73102).